Reading from the N-terminus, the 160-residue chain is Troponin C, skeletal muscle (160 aa).

N-acetylthreonine is present on threonine 2. 4 consecutive EF-hand domains span residues 15–50, 51–86, 91–126, and 127–160; these read EMIAEFKAAFDMFDADGGGDISVKELGTVMRMLGQT, PTKEELDAIIEEVDEDGSGTIDFEEFLVMMVRQMKE, KSEEELAECFRIFDRNADGYIDAEELAEIFRASGEH, and VTDEEIESLMKDGDKNNDGRIDFDEFLKMMEGVQ. Ca(2+) is bound by residues aspartate 28, aspartate 30, aspartate 34, glutamate 39, aspartate 64, aspartate 66, serine 68, threonine 70, glutamate 75, aspartate 104, asparagine 106, aspartate 108, tyrosine 110, glutamate 115, aspartate 140, asparagine 142, aspartate 144, arginine 146, and glutamate 151.

The protein belongs to the troponin C family.

Functionally, troponin is the central regulatory protein of striated muscle contraction. Tn consists of three components: Tn-I which is the inhibitor of actomyosin ATPase, Tn-T which contains the binding site for tropomyosin and Tn-C. The binding of calcium to Tn-C abolishes the inhibitory action of Tn on actin filaments. In Oryctolagus cuniculus (Rabbit), this protein is Troponin C, skeletal muscle (TNNC2).